The sequence spans 320 residues: Bifunctional phosphoglucose/phosphomannose isomerase (320 aa).

One can recognise an SIS domain in the interval 20–153 (IAKDLTPYKG…NLLGVDKDEL (134 aa)). G37, S38, S80, S82, T85, and R132 together coordinate D-fructose 6-phosphate. Residue E204 is the Proton acceptor of the active site. Residues H220 and K313 each contribute to the D-fructose 6-phosphate site. H220 functions as the Proton donor in the catalytic mechanism. K313 functions as the Proton acceptor in the catalytic mechanism.

Belongs to the PGI/PMI family. Homodimer.

It carries out the reaction alpha-D-glucose 6-phosphate = beta-D-fructose 6-phosphate. The catalysed reaction is D-mannose 6-phosphate = D-fructose 6-phosphate. In terms of biological role, dual specificity isomerase that catalyzes the isomerization of both glucose-6-phosphate and mannose-6-phosphate to fructose-6-phosphate. The sequence is that of Bifunctional phosphoglucose/phosphomannose isomerase from Aquifex aeolicus (strain VF5).